A 263-amino-acid chain; its full sequence is Probable 6-oxopurine nucleoside phosphorylase (263 aa).

Residues Thr-9, 49–50 (RH), and 82–83 (TA) each bind phosphate. Substrate is bound at residue Met-181. Thr-182 serves as a coordination point for phosphate. Position 205-207 (205-207 (NYA)) interacts with substrate.

Belongs to the PNP/MTAP phosphorylase family. MTAP subfamily. As to quaternary structure, homohexamer. Dimer of a homotrimer.

It carries out the reaction a purine D-ribonucleoside + phosphate = a purine nucleobase + alpha-D-ribose 1-phosphate. The protein operates within purine metabolism; purine nucleoside salvage. Its function is as follows. Purine nucleoside phosphorylase which is highly specific for 6-oxopurine nucleosides. Cleaves guanosine or inosine to respective bases and sugar-1-phosphate molecules. Involved in purine salvage. The sequence is that of Probable 6-oxopurine nucleoside phosphorylase from Dictyoglomus turgidum (strain DSM 6724 / Z-1310).